Consider the following 353-residue polypeptide: Mitochondrial import inner membrane translocase subunit TIM50 (353 aa).

A mitochondrion-targeting transit peptide spans 1 to 21 (MAASAALFSRLRSGLRVGARG). Residues 22 to 65 (LCTRLAPPPPRTPEQVTEIANRGGSKAQGPQHQPGSEGPSYAKK) lie on the Mitochondrial matrix side of the membrane. The interval 24–59 (TRLAPPPPRTPEQVTEIANRGGSKAQGPQHQPGSEG) is disordered. Residues 66–86 (IALWIAGLLGAGGTVSIVYIF) form a helical membrane-spanning segment. At 87-353 (GNNPVDENGT…SRLWPRSKQP (267 aa)) the chain is on the mitochondrial intermembrane side. Residues 143-286 (YYQPPYTLVL…LDLSAFLKTI (144 aa)) form the FCP1 homology domain. Serine 341 carries the phosphoserine modification.

It belongs to the TIM50 family. As to quaternary structure, component of the TIM23 complex at least composed of TIMM23, TIMM17 (TIMM17A or TIMM17B) and TIMM50; within this complex, directly interacts with TIMM23. The complex interacts with the TIMM44 component of the PAM complex and with DNAJC15.

The protein resides in the mitochondrion inner membrane. In terms of biological role, essential component of the TIM23 complex, a complex that mediates the translocation of transit peptide-containing proteins across the mitochondrial inner membrane. Has some phosphatase activity in vitro; however such activity may not be relevant in vivo. The chain is Mitochondrial import inner membrane translocase subunit TIM50 (Timm50) from Mus musculus (Mouse).